We begin with the raw amino-acid sequence, 383 residues long: Probable indole-3-pyruvate monooxygenase YUCCA10 (383 aa).

FAD is bound at residue 9 to 14 (GAGPAG). 177 to 182 (GGGNSG) contacts NADP(+).

The protein belongs to the FMO family. FAD is required as a cofactor.

It carries out the reaction indole-3-pyruvate + NADPH + O2 + H(+) = (indol-3-yl)acetate + CO2 + NADP(+) + H2O. Its pathway is plant hormone metabolism; auxin biosynthesis. Involved in auxin biosynthesis. The polypeptide is Probable indole-3-pyruvate monooxygenase YUCCA10 (YUC10) (Arabidopsis thaliana (Mouse-ear cress)).